Here is a 285-residue protein sequence, read N- to C-terminus: MENEINYWGVPDSPIDWCEENYIISKYICEFYNTFSSFIITAFGVYGIFLMMSASSRDQALFQHVKIMKELKIRQKVLFSYLSLAIVGVGSAFYHATLLYKNQLFDEFPMMLTASMFVYCILTIDPVDEKNDTATYKLMRRFLPYILSLYVIVVAITITIIRDSPIILQSSFGLLIFSNVFLSYMYTSRCLKTPVMESNPKKFLYLCIASMGIAYISWLTERKLCNNGYVIPGVQLHAVWHALTGLAGFYYIQFFITSCLEKHGYKTKLNWNYGIASVRGFIKSY.

Helical transmembrane passes span 34–54 (TFSS…MMSA), 77–97 (VLFS…YHAT), and 104–124 (LFDE…ILTI). An N-linked (GlcNAc...) asparagine glycan is attached at N131. 4 consecutive transmembrane segments (helical) span residues 141 to 161 (RFLP…ITII), 166 to 186 (IILQ…SYMY), 200 to 220 (PKKF…SWLT), and 236 to 256 (LHAV…QFFI).

This sequence belongs to the alkaline ceramidase family.

The protein resides in the membrane. This chain is Putative alkaline ceramidase dcd3B (dcd3B), found in Dictyostelium discoideum (Social amoeba).